The chain runs to 204 residues: dITP/XTP pyrophosphatase (204 aa).

11-16 (SRNRKK) serves as a coordination point for substrate. D76 serves as the catalytic Proton acceptor. D76 serves as a coordination point for Mg(2+). Residues S77, 158–161 (FGYD), K181, and 186–187 (HR) each bind substrate.

It belongs to the HAM1 NTPase family. Homodimer. The cofactor is Mg(2+).

The enzyme catalyses XTP + H2O = XMP + diphosphate + H(+). The catalysed reaction is dITP + H2O = dIMP + diphosphate + H(+). It catalyses the reaction ITP + H2O = IMP + diphosphate + H(+). Pyrophosphatase that catalyzes the hydrolysis of nucleoside triphosphates to their monophosphate derivatives, with a high preference for the non-canonical purine nucleotides XTP (xanthosine triphosphate), dITP (deoxyinosine triphosphate) and ITP. Seems to function as a house-cleaning enzyme that removes non-canonical purine nucleotides from the nucleotide pool, thus preventing their incorporation into DNA/RNA and avoiding chromosomal lesions. The sequence is that of dITP/XTP pyrophosphatase from Mycobacterium tuberculosis (strain CDC 1551 / Oshkosh).